A 371-amino-acid chain; its full sequence is 4-hydroxy-3-methylbut-2-en-1-yl diphosphate synthase (flavodoxin) (371 aa).

Cys-270, Cys-273, Cys-305, and Glu-312 together coordinate [4Fe-4S] cluster.

This sequence belongs to the IspG family. The cofactor is [4Fe-4S] cluster.

The catalysed reaction is (2E)-4-hydroxy-3-methylbut-2-enyl diphosphate + oxidized [flavodoxin] + H2O + 2 H(+) = 2-C-methyl-D-erythritol 2,4-cyclic diphosphate + reduced [flavodoxin]. Its pathway is isoprenoid biosynthesis; isopentenyl diphosphate biosynthesis via DXP pathway; isopentenyl diphosphate from 1-deoxy-D-xylulose 5-phosphate: step 5/6. Functionally, converts 2C-methyl-D-erythritol 2,4-cyclodiphosphate (ME-2,4cPP) into 1-hydroxy-2-methyl-2-(E)-butenyl 4-diphosphate. The polypeptide is 4-hydroxy-3-methylbut-2-en-1-yl diphosphate synthase (flavodoxin) (Shewanella sp. (strain ANA-3)).